The following is a 401-amino-acid chain: cAMP-dependent protein kinase type II-alpha regulatory subunit (401 aa).

At Ser2 the chain carries N-acetylserine. A dimerization and phosphorylation region spans residues 2–135; the sequence is SHIQIPPGLT…RLQEACKDIL (134 aa). Phosphoserine occurs at positions 47, 74, 76, and 96. A disordered region spans residues 61–83; it reads ESSAVPVIEEDGESDSDSEDADL. Residues 68–83 are compositionally biased toward acidic residues; that stretch reads IEEDGESDSDSEDADL. 3',5'-cyclic AMP contacts are provided by residues 136–257, Glu205, Arg214, 258–401, Glu335, and Arg344; these read LFKN…ESVP and LFKS…DPGQ. At Thr212 the chain carries Phosphothreonine; by PDPK1. 2 positions are modified to phosphoserine: Ser347 and Ser392.

It belongs to the cAMP-dependent kinase regulatory chain family. The inactive form of the enzyme is composed of two regulatory chains and two catalytic chains. Activation by cAMP produces two active catalytic monomers and a regulatory dimer that binds four cAMP molecules. Interacts with AKAP4. Interacts with CBFA2T3. Interacts with the phosphorylated form of PJA2. Interacts with MYRIP. This interaction may link PKA to components of the exocytosis machinery, thus facilitating exocytosis, including insulin release. Forms a complex composed of PRKAR2A, GSK3B and GSKIP through GSKIP interaction; facilitates PKA-induced phosphorylation and regulates GSK3B activity. Interacts with ADCY8; inhibits adenylate cyclase activity through PKA phosphorylation. Post-translationally, phosphorylated by the activated catalytic chain. Four types of regulatory chains are found: I-alpha, I-beta, II-alpha, and II-beta. Their expression varies among tissues and is in some cases constitutive and in others inducible.

It is found in the cytoplasm. The protein resides in the cell membrane. Regulatory subunit of the cAMP-dependent protein kinases involved in cAMP signaling in cells. Type II regulatory chains mediate membrane association by binding to anchoring proteins, including the MAP2 kinase. This is cAMP-dependent protein kinase type II-alpha regulatory subunit (Prkar2a) from Mus musculus (Mouse).